Consider the following 254-residue polypeptide: Probable phosphatase Sbal_1472 (254 aa).

Residues His8, His10, His16, His41, Glu74, His102, His132, Asp193, and His195 each coordinate Zn(2+).

This sequence belongs to the PHP family. Zn(2+) is required as a cofactor.

This Shewanella baltica (strain OS155 / ATCC BAA-1091) protein is Probable phosphatase Sbal_1472.